The following is a 360-amino-acid chain: Glycerol-3-phosphate dehydrogenase [NAD(+)], cytoplasmic (360 aa).

NAD(+)-binding positions include 11–16 (GSGNWG), phenylalanine 98, lysine 121, and alanine 155. Position 121 (lysine 121) interacts with substrate. The Proton acceptor role is filled by lysine 206. Residues arginine 270 and glutamine 299 each contribute to the NAD(+) site. Position 270–271 (270–271 (RN)) interacts with substrate.

The protein belongs to the NAD-dependent glycerol-3-phosphate dehydrogenase family. In terms of assembly, homodimer.

The protein localises to the cytoplasm. It carries out the reaction sn-glycerol 3-phosphate + NAD(+) = dihydroxyacetone phosphate + NADH + H(+). Its pathway is phospholipid metabolism; alpha-glycerophosphate cycle. The chain is Glycerol-3-phosphate dehydrogenase [NAD(+)], cytoplasmic (Gpdh1) from Drosophila kanekoi (Fruit fly).